We begin with the raw amino-acid sequence, 230 residues long: 6-carboxyhexanoate--CoA ligase (230 aa).

It belongs to the BioW family. As to quaternary structure, homodimer. Mg(2+) is required as a cofactor.

The catalysed reaction is heptanedioate + ATP + CoA = 6-carboxyhexanoyl-CoA + AMP + diphosphate. Its pathway is metabolic intermediate metabolism; pimeloyl-CoA biosynthesis; pimeloyl-CoA from pimelate: step 1/1. Catalyzes the transformation of pimelate into pimeloyl-CoA with concomitant hydrolysis of ATP to AMP. This is 6-carboxyhexanoate--CoA ligase from Staphylococcus aureus (strain MRSA252).